A 46-amino-acid chain; its full sequence is Endochitinase 3 (46 aa).

Positions 1 to 21 (MTPQGNKPSSHDVITGRWTPS) are disordered.

Belongs to the glycosyl hydrolase 19 family. Chitinase class I subfamily.

It catalyses the reaction Random endo-hydrolysis of N-acetyl-beta-D-glucosaminide (1-&gt;4)-beta-linkages in chitin and chitodextrins.. Its function is as follows. Defense against chitin-containing fungal and bacterial pathogens. This chain is Endochitinase 3, found in Arachis hypogaea (Peanut).